The chain runs to 100 residues: NADH-quinone oxidoreductase subunit K (100 aa).

Transmembrane regions (helical) follow at residues L4–I24, L29–V49, and V60–L80.

It belongs to the complex I subunit 4L family. As to quaternary structure, NDH-1 is composed of 14 different subunits. Subunits NuoA, H, J, K, L, M, N constitute the membrane sector of the complex.

The protein localises to the cell membrane. The enzyme catalyses a quinone + NADH + 5 H(+)(in) = a quinol + NAD(+) + 4 H(+)(out). Functionally, NDH-1 shuttles electrons from NADH, via FMN and iron-sulfur (Fe-S) centers, to quinones in the respiratory chain. The immediate electron acceptor for the enzyme in this species is believed to be ubiquinone. Couples the redox reaction to proton translocation (for every two electrons transferred, four hydrogen ions are translocated across the cytoplasmic membrane), and thus conserves the redox energy in a proton gradient. The polypeptide is NADH-quinone oxidoreductase subunit K (Baumannia cicadellinicola subsp. Homalodisca coagulata).